A 321-amino-acid chain; its full sequence is Protein BIG GRAIN 1-like E (321 aa).

Residues 134 to 217 are disordered; it reads AGSKKNKSKS…PPPYLNTPTK (84 aa). Basic residues predominate over residues 135-147; sequence GSKKNKSKSKSKT. A compositionally biased stretch (low complexity) spans 172–206; the sequence is ISHFFSSSRSTSTTTTTTASSSSKSLISSSSSGFR.

The protein belongs to the BIG GRAIN 1 (BG1) plant protein family.

The protein resides in the cell membrane. Functionally, involved in auxin transport. Regulator of the auxin signaling pathway. This Arabidopsis thaliana (Mouse-ear cress) protein is Protein BIG GRAIN 1-like E.